A 366-amino-acid polypeptide reads, in one-letter code: NADH-quinone oxidoreductase subunit H (366 aa).

8 helical membrane-spanning segments follow: residues 27-47 (LLLI…LTFA), 99-119 (FLFL…WAVV), 134-154 (LLYI…AGWA), 168-188 (AAQV…VLMM), 206-226 (FLNW…ISGV), 268-288 (ILVA…PVDI), 294-314 (IPGM…FLWF), and 329-349 (LGWK…GMVM).

This sequence belongs to the complex I subunit 1 family. NDH-1 is composed of 14 different subunits. Subunits NuoA, H, J, K, L, M, N constitute the membrane sector of the complex.

Its subcellular location is the cell inner membrane. It catalyses the reaction a quinone + NADH + 5 H(+)(in) = a quinol + NAD(+) + 4 H(+)(out). Functionally, NDH-1 shuttles electrons from NADH, via FMN and iron-sulfur (Fe-S) centers, to quinones in the respiratory chain. The immediate electron acceptor for the enzyme in this species is believed to be ubiquinone. Couples the redox reaction to proton translocation (for every two electrons transferred, four hydrogen ions are translocated across the cytoplasmic membrane), and thus conserves the redox energy in a proton gradient. This subunit may bind ubiquinone. The polypeptide is NADH-quinone oxidoreductase subunit H (Nitrosomonas europaea (strain ATCC 19718 / CIP 103999 / KCTC 2705 / NBRC 14298)).